A 381-amino-acid polypeptide reads, in one-letter code: Lysophosphatidylserine lipase ABHD12 (381 aa).

Residues 1–58 are Cytoplasmic-facing; it reads MRKRNESVTVEHERAAAAPAPLDKGCSLRHSLRLPAADTGMKRPLGRRHGLWFRLRRL. A helical transmembrane segment spans residues 59 to 79; sequence IIWLLGVYIAIPFLVKLCPAI. At 80–381 the chain is on the extracellular side; it reads QAKLVFLNFV…LGIPEHEHHH (302 aa). N106 carries N-linked (GlcNAc...) asparagine glycosylation. The active-site Nucleophile is S229. Catalysis depends on charge relay system residues D316 and H355.

It belongs to the serine esterase family.

It localises to the endoplasmic reticulum membrane. The catalysed reaction is 1-(9Z-octadecenoyl)-sn-glycero-3-phospho-L-serine + H2O = sn-glycero-3-phospho-L-serine + (9Z)-octadecenoate + H(+). It catalyses the reaction 1-(9Z-octadecenoyl)-sn-glycero-3-phospho-(1'-sn-glycerol) + H2O = sn-glycero-3-phospho-(1'-sn-glycerol) + (9Z)-octadecenoate + H(+). The enzyme catalyses 1-(9Z-octadecenoyl)-sn-glycero-3-phospho-(1D-myo-inositol) + H2O = sn-glycero-3-phospho-1D-myo-inositol + (9Z)-octadecenoate + H(+). It carries out the reaction 1-(9Z-octadecenoyl)-sn-glycero-3-phosphoethanolamine + H2O = sn-glycero-3-phosphoethanolamine + (9Z)-octadecenoate + H(+). The catalysed reaction is 1-(9Z-octadecenoyl)-sn-glycero-3-phosphocholine + H2O = 1-(9Z-octadecenoyl)-sn-glycerol + phosphocholine + H(+). It catalyses the reaction 2-(9Z-octadecenoyl)-glycerol + H2O = glycerol + (9Z)-octadecenoate + H(+). The enzyme catalyses 1-hexadecanoyl-sn-glycero-3-phospho-L-serine + H2O = sn-glycero-3-phospho-L-serine + hexadecanoate + H(+). It carries out the reaction 2-(5Z,8Z,11Z,14Z-eicosatetraenoyl)-glycerol + H2O = glycerol + (5Z,8Z,11Z,14Z)-eicosatetraenoate + H(+). The catalysed reaction is Hydrolyzes glycerol monoesters of long-chain fatty acids.. It catalyses the reaction 1-decanoylglycerol + H2O = decanoate + glycerol + H(+). The enzyme catalyses 1-dodecanoylglycerol + H2O = dodecanoate + glycerol + H(+). It carries out the reaction 1-tetradecanoylglycerol + H2O = tetradecanoate + glycerol + H(+). The catalysed reaction is 2-hexadecanoylglycerol + H2O = glycerol + hexadecanoate + H(+). It catalyses the reaction 1-(9Z-octadecenoyl)-glycerol + H2O = glycerol + (9Z)-octadecenoate + H(+). The enzyme catalyses 2-(9Z,12Z-octadecadienoyl)-glycerol + H2O = (9Z,12Z)-octadecadienoate + glycerol + H(+). It carries out the reaction 1-(5Z,8Z,11Z,14Z-eicosatetraenoyl)-glycerol + H2O = glycerol + (5Z,8Z,11Z,14Z)-eicosatetraenoate + H(+). The catalysed reaction is 1-(9Z,12Z-octadecadienoyl)-glycerol + H2O = (9Z,12Z)-octadecadienoate + glycerol + H(+). It catalyses the reaction 1-hexadecanoylglycerol + H2O = glycerol + hexadecanoate + H(+). The enzyme catalyses 1-octadecanoylglycerol + H2O = octadecanoate + glycerol + H(+). It carries out the reaction 1-octadecanoyl-2-(9,10-epoxyoctadecanoyl)-sn-glycero-3-phospho-L-serine + H2O = 9,10-epoxyoctadecanoate + 1-octadecanoyl-sn-glycero-3-phosphoserine + H(+). The catalysed reaction is 1-octadecanoyl-2-(10-hydroxyoctadecanoyl)-sn-glycero-3-phospho-L-serine + H2O = 1-octadecanoyl-sn-glycero-3-phosphoserine + 10-hydroxyoctadecanoate + H(+). It catalyses the reaction 1-hexadecanoyl-2-(10-hydroxyoctadecanoyl)-sn-glycero-3-phospho-L-serine + H2O = 10-hydroxyoctadecanoate + 1-hexadecanoyl-sn-glycero-3-phospho-L-serine + H(+). Functionally, lysophosphatidylserine (LPS) lipase that mediates the hydrolysis of lysophosphatidylserine, a class of signaling lipids that regulates immunological and neurological processes. Represents a major lysophosphatidylserine lipase in the brain, thereby playing a key role in the central nervous system. Also able to hydrolyze oxidized phosphatidylserine; oxidized phosphatidylserine is produced in response to severe inflammatory stress and constitutes a proapoptotic 'eat me' signal. Also has monoacylglycerol (MAG) lipase activity: hydrolyzes 2-arachidonoylglycerol (2-AG), thereby acting as a regulator of endocannabinoid signaling pathways. Has a strong preference for very-long-chain lipid substrates; substrate specificity is likely due to improved catalysis and not improved substrate binding. This is Lysophosphatidylserine lipase ABHD12 from Gallus gallus (Chicken).